We begin with the raw amino-acid sequence, 420 residues long: Senescence-associated protein SPA15, chloroplastic (420 aa).

The N-terminal 68 residues, Met-1–Arg-68, are a transit peptide targeting the chloroplast. The disordered stretch occupies residues Glu-85–Pro-111.

It belongs to the ATA15/OSA15 family. Expressed in leaves.

It is found in the plastid. It localises to the chloroplast. In terms of biological role, may be involved in the regulation of leaf senescence. This chain is Senescence-associated protein SPA15, chloroplastic, found in Ipomoea batatas (Sweet potato).